The following is a 229-amino-acid chain: Small ribosomal subunit protein uS3 (229 aa).

The KH type-2 domain occupies 17–85 (VKEWIKDEVR…NPQVSVDEVE (69 aa)). Positions 202–229 (LRGESGEDEGDKGDEQGGEAQEAEGAGA) are disordered. Residues 219–229 (GEAQEAEGAGA) are compositionally biased toward low complexity.

The protein belongs to the universal ribosomal protein uS3 family. In terms of assembly, part of the 30S ribosomal subunit.

In terms of biological role, binds the lower part of the 30S subunit head. This chain is Small ribosomal subunit protein uS3, found in Archaeoglobus fulgidus (strain ATCC 49558 / DSM 4304 / JCM 9628 / NBRC 100126 / VC-16).